The primary structure comprises 361 residues: Ribosomal RNA large subunit methyltransferase M (361 aa).

S-adenosyl-L-methionine contacts are provided by residues Ser186, 219 to 222, Asp238, Asp258, and Asp275; that span reads CPGG. Catalysis depends on Lys304, which acts as the Proton acceptor.

It belongs to the class I-like SAM-binding methyltransferase superfamily. RNA methyltransferase RlmE family. RlmM subfamily. Monomer.

Its subcellular location is the cytoplasm. The enzyme catalyses cytidine(2498) in 23S rRNA + S-adenosyl-L-methionine = 2'-O-methylcytidine(2498) in 23S rRNA + S-adenosyl-L-homocysteine + H(+). In terms of biological role, catalyzes the 2'-O-methylation at nucleotide C2498 in 23S rRNA. The sequence is that of Ribosomal RNA large subunit methyltransferase M from Pseudoalteromonas translucida (strain TAC 125).